Reading from the N-terminus, the 77-residue chain is Acyl carrier protein (77 aa).

In terms of domain architecture, Carrier spans 2–77; that stretch reads ADTLSRITKI…DVVEYIEGRQ (76 aa). An O-(pantetheine 4'-phosphoryl)serine modification is found at Ser-37.

This sequence belongs to the acyl carrier protein (ACP) family. 4'-phosphopantetheine is transferred from CoA to a specific serine of apo-ACP by AcpS. This modification is essential for activity because fatty acids are bound in thioester linkage to the sulfhydryl of the prosthetic group.

It localises to the cytoplasm. It functions in the pathway lipid metabolism; fatty acid biosynthesis. In terms of biological role, carrier of the growing fatty acid chain in fatty acid biosynthesis. The chain is Acyl carrier protein from Halalkalibacterium halodurans (strain ATCC BAA-125 / DSM 18197 / FERM 7344 / JCM 9153 / C-125) (Bacillus halodurans).